A 209-amino-acid chain; its full sequence is MSYLYDSYFQYIHYNVSMIPTVVKQTSRGDRAYDIFSLLLKERIIFVIGKIENFMANLIVAQIMFLESEDPVKDIHLYINSPGGEVTAGMSIYDIMQFVKPNISTYCIGQAASMGAFLLAAGTTGKRFCLPNSRVMIHQPLGSLHGQATDIAIHATEILKVKENINKLMAKHTGKSIDVIRQDMERDCFLSADESVKYGLVDSVLSKRI.

The Nucleophile role is filled by S113. Residue H138 is part of the active site.

The protein belongs to the peptidase S14 family. Fourteen ClpP subunits assemble into 2 heptameric rings which stack back to back to give a disk-like structure with a central cavity, resembling the structure of eukaryotic proteasomes.

Its subcellular location is the cytoplasm. The enzyme catalyses Hydrolysis of proteins to small peptides in the presence of ATP and magnesium. alpha-casein is the usual test substrate. In the absence of ATP, only oligopeptides shorter than five residues are hydrolyzed (such as succinyl-Leu-Tyr-|-NHMec, and Leu-Tyr-Leu-|-Tyr-Trp, in which cleavage of the -Tyr-|-Leu- and -Tyr-|-Trp bonds also occurs).. Its function is as follows. Cleaves peptides in various proteins in a process that requires ATP hydrolysis. Has a chymotrypsin-like activity. Plays a major role in the degradation of misfolded proteins. This Blochmanniella floridana protein is ATP-dependent Clp protease proteolytic subunit.